Consider the following 521-residue polypeptide: U4/U6 small nuclear ribonucleoprotein Prp4 (521 aa).

Position 26 is an N6-acetyllysine (Lys-26). WD repeat units follow at residues Gly-228 to Thr-267, Gly-270 to Asp-317, Gly-320 to His-359, Gly-362 to Phe-401, Gly-404 to Thr-443, Ala-446 to Thr-486, and Gly-489 to Glu-521.

In terms of assembly, component of the precatalytic spliceosome (spliceosome B complex). Component of the U4/U6-U5 tri-snRNP complex, a building block of the precatalytic spliceosome (spliceosome B complex). The U4/U6-U5 tri-snRNP complex is composed of the U4, U6 and U5 snRNAs and at least PRPF3, PRPF4, PRPF6, PRPF8, PRPF31, SNRNP200, TXNL4A, SNRNP40, SNRPB, SNRPD1, SNRPD2, SNRPD3, SNRPE, SNRPF, SNRPG, DDX23, CD2BP2, PPIH, SNU13, EFTUD2, SART1 and USP39, plus LSM2, LSM3, LSM4, LSM5, LSM6, LSM7 and LSM8. Interacts directly with PRPF18, PPIH and PRPF3. Part of a heteromeric complex containing PPIH, PRPF3 and PRPF4 that is stable in the absence of RNA. Interacts with ERCC6.

The protein localises to the nucleus. Its subcellular location is the nucleus speckle. In terms of biological role, plays a role in pre-mRNA splicing as component of the U4/U6-U5 tri-snRNP complex that is involved in spliceosome assembly, and as component of the precatalytic spliceosome (spliceosome B complex). This Mus musculus (Mouse) protein is U4/U6 small nuclear ribonucleoprotein Prp4 (Prpf4).